Here is a 393-residue protein sequence, read N- to C-terminus: Protein FAM53C (393 aa).

Position 1 is an N-acetylmethionine (Met1). Residues 77–120 are disordered; it reads HLRPPSRGNSPKEPPLSQVLSPEPPDPEKLPVPPAPPSKRHCRS. 2 positions are modified to phosphoserine: Ser122 and Ser162. 2 disordered regions span residues 141 to 167 and 204 to 283; these read LWTPIKHRGNAGGGGPQVPQQSPPKRV and QPCA…ARKT. The segment covering 204–215 has biased composition (polar residues); sequence QPCATSPQSGSW. Ser232, Ser234, Ser255, Ser273, and Ser299 each carry phosphoserine. Over residues 241-256 the composition is skewed to low complexity; that stretch reads ASRFLPSARSSPASSP. Over residues 343–355 the composition is skewed to low complexity; sequence SCSPVEGSSQVLS. Residues 343–365 are disordered; sequence SCSPVEGSSQVLSESEEEEEGSV.

The protein belongs to the FAM53 family.

The sequence is that of Protein FAM53C from Mus musculus (Mouse).